A 150-amino-acid polypeptide reads, in one-letter code: Large ribosomal subunit protein bL9 (150 aa).

Belongs to the bacterial ribosomal protein bL9 family.

In terms of biological role, binds to the 23S rRNA. The sequence is that of Large ribosomal subunit protein bL9 from Streptococcus pyogenes serotype M3 (strain SSI-1).